We begin with the raw amino-acid sequence, 105 residues long: Anti-sigma factor RsrA (105 aa).

Zn(2+) contacts are provided by cysteine 11, histidine 37, cysteine 41, and cysteine 44. Residues cysteine 11 and cysteine 44 are joined by a disulfide bond. The contributes to redox-sensitivity stretch occupies residues 33–47; that stretch reads KFEHHFEECSPCLEK. The tract at residues 86-105 is disordered; sequence QSVPEHDVAAAPSSSAPQES. A compositionally biased stretch (low complexity) spans 94–105; it reads AAAPSSSAPQES.

This sequence belongs to the zinc-associated anti-sigma factor (ZAS) superfamily. Interacts with cognate sigma factor SigR under reducing but not oxiding conditions. Treatment with the thiol-oxidzing agent diamide inhibits the interaction, while incubation with thioredoxin (trxA) stimulates the interaction. It depends on Zn(2+) as a cofactor. Under oxidizing conditions up to 3 disulfide bonds are formed. A single disulfide bond inhibits binding to SigR. Cys-11 forms a disulfide bond with either Cys-44 (the major bind) or Cys-41 (a minor bond).

A redox-regulated anti-sigma factor for extracytoplasmic function (ECF) sigma factor SigR, and a key sensor of disulfide stress. Holds SigR, its cognate ECF sigma factor, in an inactive form, inhibiting its sigma activity under reducing but not oxidizing conditions; oxidation and reduction of the anti-sigma factor is reversible. Mycothiol (MSH) is competent for reduction of RsrA, allowing it to bind to SigR. In conjunction with its cognate sigma factor SigR may sense the intracellular level of reduced MSH. Probably releases SigR during oxidative stress. The sequence is that of Anti-sigma factor RsrA (rsrA) from Streptomyces coelicolor (strain ATCC BAA-471 / A3(2) / M145).